Consider the following 456-residue polypeptide: Adenylosuccinate lyase (456 aa).

N(6)-(1,2-dicarboxyethyl)-AMP contacts are provided by residues 15–16, 90–92, and 122–123; these read RY, NHD, and TS. Residue histidine 171 is the Proton donor/acceptor of the active site. Glutamine 247 is a N(6)-(1,2-dicarboxyethyl)-AMP binding site. Serine 295 (proton donor/acceptor) is an active-site residue. N(6)-(1,2-dicarboxyethyl)-AMP-binding positions include serine 296, 301–303, asparagine 309, arginine 335, and 340–344; these read KVN and STVLR.

Belongs to the lyase 1 family. Adenylosuccinate lyase subfamily. Homotetramer. Residues from neighboring subunits contribute catalytic and substrate-binding residues to each active site.

It catalyses the reaction N(6)-(1,2-dicarboxyethyl)-AMP = fumarate + AMP. The catalysed reaction is (2S)-2-[5-amino-1-(5-phospho-beta-D-ribosyl)imidazole-4-carboxamido]succinate = 5-amino-1-(5-phospho-beta-D-ribosyl)imidazole-4-carboxamide + fumarate. It participates in purine metabolism; AMP biosynthesis via de novo pathway; AMP from IMP: step 2/2. Its pathway is purine metabolism; IMP biosynthesis via de novo pathway; 5-amino-1-(5-phospho-D-ribosyl)imidazole-4-carboxamide from 5-amino-1-(5-phospho-D-ribosyl)imidazole-4-carboxylate: step 2/2. Functionally, catalyzes two reactions in de novo purine nucleotide biosynthesis. Catalyzes the breakdown of 5-aminoimidazole- (N-succinylocarboxamide) ribotide (SAICAR or 2-[5-amino-1-(5-phospho-beta-D-ribosyl)imidazole-4-carboxamido]succinate) to 5-aminoimidazole-4-carboxamide ribotide (AICAR or 5-amino-1-(5-phospho-beta-D-ribosyl)imidazole-4-carboxamide) and fumarate, and of adenylosuccinate (ADS or N(6)-(1,2-dicarboxyethyl)-AMP) to adenosine monophosphate (AMP) and fumarate. In Buchnera aphidicola subsp. Acyrthosiphon pisum (strain APS) (Acyrthosiphon pisum symbiotic bacterium), this protein is Adenylosuccinate lyase (purB).